Consider the following 436-residue polypeptide: MVLPTVAIVGRPNVGKSTLFNRIAGERISIVEDVEGVTRDRIYATGEWLNRQFSLIDTGGIDDVDAPFMEQIKHQAQIAMEEADVIVFVVSGKEGVTDADEYVSKILYRTNTPVILAVNKVDNPEMRNDIYDFYSLGLGDPYPVSSVHGIGTGDVLDAIVENLPVEEAEENDDIIRFSLIGRPNVGKSSLINAILGEDRVIASPVAGTTRDAIDTHFTDADGQEFTMIDTAGMRKSGKIYENTEKYSVMRAMRAIDRSDVVLMVINAEEGIREYDKRIAGFAHEAGKGMIIVVNKWDTIDKDNHTVAKWEADIRDQFQFLTYAPIIFVSALTKQRLNKLPDLIKRISESQNKRIPSAVLNDVIMDAIAINPTPTDKGKRLKIFYATQVSVKPPTFVVFVNEEELMHFSYLRFLENQIRAAFTFEGTPIHLIARKRK.

2 consecutive EngA-type G domains span residues 4 to 167 (PTVA…PVEE) and 175 to 351 (IRFS…ESQN). Residues 10 to 17 (GRPNVGKS), 57 to 61 (DTGGI), 119 to 122 (NKVD), 181 to 188 (GRPNVGKS), 229 to 233 (DTAGM), and 294 to 297 (NKWD) contribute to the GTP site. Residues 352 to 436 (KRIPSAVLND…PIHLIARKRK (85 aa)) form the KH-like domain.

This sequence belongs to the TRAFAC class TrmE-Era-EngA-EngB-Septin-like GTPase superfamily. EngA (Der) GTPase family. In terms of assembly, associates with the 50S ribosomal subunit.

GTPase that plays an essential role in the late steps of ribosome biogenesis. The chain is GTPase Der from Streptococcus pyogenes serotype M1.